The chain runs to 1755 residues: Transposon Ty1-OL Gag-Pol polyprotein (1755 aa).

3 stretches are compositionally biased toward polar residues: residues 1-23 (MESQ…SVTS), 48-60 (TKAN…TPAS), and 127-152 (QSQF…GNTF). 3 disordered regions span residues 1–93 (MESQ…MMTQ), 126–173 (PQSQ…RPPP), and 352–421 (GSRN…SKST). A compositionally biased stretch (low complexity) spans 153-165 (TDSSSADSDMTST). Residues 299 to 401 (NNGIHINNKV…NSKSKTARAH (103 aa)) form an RNA-binding region. Positions 402-418 (NVSTSNNSPSTDNDSIS) are enriched in low complexity. S416 bears the Phosphoserine mark. Residue D461 is the For protease activity; shared with dimeric partner of the active site. An integrase-type zinc finger-like region spans residues 583–640 (NVHTSESTRKYPYPFIHRMLAHANAQTIRYSLKNNTITYFNESDVDWSSAIDYQCPDC). Residues 660–835 (NSYEPFQYLH…AGLDISTLLP (176 aa)) enclose the Integrase catalytic domain. 2 residues coordinate Mg(2+): D671 and D736. Disordered stretches follow at residues 956–1087 (SKAV…ETEK), 1092–1111 (RSPS…NIVP), and 1130–1171 (DLPL…DSNA). Positions 960–969 (SPTDSTPPST) are enriched in low complexity. Polar residues predominate over residues 1005-1015 (STPQISNIEST). The segment covering 1038 to 1053 (ESSHASKSKDFRHSDS) has biased composition (basic and acidic residues). Polar residues-rich tracts occupy residues 1054-1082 (YSEN…QISD) and 1101-1111 (PENNSSHNIVP). The short motif at 1178-1212 (KKRSLEDNETEIKVSRDTWNTKNMRSLEPPRSKKR) is the Bipartite nuclear localization signal element. The 139-residue stretch at 1338–1476 (NNYYITQLDI…DILGLEIKYQ (139 aa)) folds into the Reverse transcriptase Ty1/copia-type domain. Mg(2+) contacts are provided by D1346, D1427, D1428, D1610, E1652, and D1685. Residues 1610–1752 (DASYGNQPYY…IKTFKLLTNK (143 aa)) enclose the RNase H Ty1/copia-type domain.

As to quaternary structure, the capsid protein forms a homotrimer, from which the VLPs are assembled. The protease is a homodimer, whose active site consists of two apposed aspartic acid residues. In terms of processing, initially, virus-like particles (VLPs) are composed of the structural unprocessed proteins Gag and Gag-Pol, and also contain the host initiator methionine tRNA (tRNA(i)-Met) which serves as a primer for minus-strand DNA synthesis, and a dimer of genomic Ty RNA. Processing of the polyproteins occurs within the particle and proceeds by an ordered pathway, called maturation. First, the protease (PR) is released by autocatalytic cleavage of the Gag-Pol polyprotein yielding capsid protein p45 and a Pol-p154 precursor protein. This cleavage is a prerequisite for subsequent processing of Pol-p154 at the remaining sites to release the mature structural and catalytic proteins. Maturation takes place prior to the RT reaction and is required to produce transposition-competent VLPs.

It is found in the cytoplasm. Its subcellular location is the nucleus. The enzyme catalyses DNA(n) + a 2'-deoxyribonucleoside 5'-triphosphate = DNA(n+1) + diphosphate. The catalysed reaction is Endonucleolytic cleavage to 5'-phosphomonoester.. Capsid protein (CA) is the structural component of the virus-like particle (VLP), forming the shell that encapsulates the retrotransposons dimeric RNA genome. The particles are assembled from trimer-clustered units and there are holes in the capsid shells that allow for the diffusion of macromolecules. CA also has nucleocapsid-like chaperone activity, promoting primer tRNA(i)-Met annealing to the multipartite primer-binding site (PBS), dimerization of Ty1 RNA and initiation of reverse transcription. Its function is as follows. The aspartyl protease (PR) mediates the proteolytic cleavages of the Gag and Gag-Pol polyproteins after assembly of the VLP. Functionally, reverse transcriptase/ribonuclease H (RT) is a multifunctional enzyme that catalyzes the conversion of the retro-elements RNA genome into dsDNA within the VLP. The enzyme displays a DNA polymerase activity that can copy either DNA or RNA templates, and a ribonuclease H (RNase H) activity that cleaves the RNA strand of RNA-DNA heteroduplexes during plus-strand synthesis and hydrolyzes RNA primers. The conversion leads to a linear dsDNA copy of the retrotransposon that includes long terminal repeats (LTRs) at both ends. In terms of biological role, integrase (IN) targets the VLP to the nucleus, where a subparticle preintegration complex (PIC) containing at least integrase and the newly synthesized dsDNA copy of the retrotransposon must transit the nuclear membrane. Once in the nucleus, integrase performs the integration of the dsDNA into the host genome. This chain is Transposon Ty1-OL Gag-Pol polyprotein (TY1B-OL), found in Saccharomyces cerevisiae (strain ATCC 204508 / S288c) (Baker's yeast).